The sequence spans 432 residues: Adenylosuccinate synthetase (432 aa).

GTP is bound by residues 13–19 and 41–43; these read GDEGKGK and GHT. Asp-14 functions as the Proton acceptor in the catalytic mechanism. Residues Asp-14 and Gly-41 each contribute to the Mg(2+) site. IMP-binding positions include 14-17, 39-42, Thr-130, Arg-144, Gln-225, Thr-240, and Arg-304; these read DEGK and NAGH. The Proton donor role is filled by His-42. 300–306 contributes to the substrate binding site; the sequence is ATTGRRR. GTP-binding positions include Arg-306, 332-334, and 415-417; these read KLD and STG.

The protein belongs to the adenylosuccinate synthetase family. As to quaternary structure, homodimer. The cofactor is Mg(2+).

Its subcellular location is the cytoplasm. The enzyme catalyses IMP + L-aspartate + GTP = N(6)-(1,2-dicarboxyethyl)-AMP + GDP + phosphate + 2 H(+). It participates in purine metabolism; AMP biosynthesis via de novo pathway; AMP from IMP: step 1/2. Its function is as follows. Plays an important role in the de novo pathway of purine nucleotide biosynthesis. Catalyzes the first committed step in the biosynthesis of AMP from IMP. The sequence is that of Adenylosuccinate synthetase from Shigella flexneri serotype 5b (strain 8401).